The primary structure comprises 313 residues: Pantoate--beta-alanine ligase (313 aa).

Residue 36 to 43 (MGYLHQGH) coordinates ATP. Catalysis depends on H43, which acts as the Proton donor. Q71 contributes to the (R)-pantoate binding site. Q71 serves as a coordination point for beta-alanine. 178 to 181 (GKKD) is a binding site for ATP. A (R)-pantoate-binding site is contributed by Q184. An ATP-binding site is contributed by 215–218 (MSSR).

The protein belongs to the pantothenate synthetase family. Homodimer.

Its subcellular location is the cytoplasm. The protein localises to the cytosol. The catalysed reaction is (R)-pantoate + beta-alanine + ATP = (R)-pantothenate + AMP + diphosphate + H(+). It functions in the pathway cofactor biosynthesis; (R)-pantothenate biosynthesis; (R)-pantothenate from (R)-pantoate and beta-alanine: step 1/1. Catalyzes the condensation of pantoate with beta-alanine to form pantothenate. Essential for panthotenate biosynthesis. The chain is Pantoate--beta-alanine ligase (PANC) from Oryza sativa subsp. japonica (Rice).